The primary structure comprises 443 residues: Regulator of sigma E protease (443 aa).

Residue histidine 21 participates in Zn(2+) binding. Glutamate 22 is a catalytic residue. Residue histidine 25 coordinates Zn(2+). The helical transmembrane segment at 98–118 threads the bilayer; the sequence is FVIIAGPLANFIFAIFAYWVI. PDZ domains follow at residues 106 to 185 and 198 to 287; these read ANFI…SPFN and NWTF…TPVR. The next 2 membrane-spanning stretches (helical) occupy residues 369–389 and 423–443; these read LVYFLSFMALISVNLGIMNLF and IGAALLLSLTVFALFNDFLRL.

Belongs to the peptidase M50B family. As to quaternary structure, interacts with RseA. Zn(2+) is required as a cofactor.

The protein resides in the cell inner membrane. Its function is as follows. A site-2 regulated intramembrane protease (S2P) that cleaves a peptide bond in the transmembrane region of RseA. Part of a regulated intramembrane proteolysis (RIP) cascade. Acts on DegS-cleaved RseA to release the cytoplasmic domain of RseA. This provides the cell with sigma-E (RpoE) activity through the proteolysis of RseA. The chain is Regulator of sigma E protease (rsep) from Haemophilus influenzae (strain ATCC 51907 / DSM 11121 / KW20 / Rd).